Reading from the N-terminus, the 506-residue chain is Maturase K (506 aa).

Belongs to the intron maturase 2 family. MatK subfamily.

Its subcellular location is the plastid. It localises to the chloroplast. In terms of biological role, usually encoded in the trnK tRNA gene intron. Probably assists in splicing its own and other chloroplast group II introns. This chain is Maturase K, found in Arctostaphylos uva-ursi (Bearberry).